Here is a 218-residue protein sequence, read N- to C-terminus: UPF0502 protein Mmwyl1_3509 (218 aa).

Belongs to the UPF0502 family.

This Marinomonas sp. (strain MWYL1) protein is UPF0502 protein Mmwyl1_3509.